A 113-amino-acid chain; its full sequence is Putative anti-sigma factor antagonist TM1081 homolog (113 aa).

Residues 1–110 (MFPYKIVEDV…DTISEALEEV (110 aa)) enclose the STAS domain. S55 bears the Phosphoserine mark.

The protein belongs to the anti-sigma-factor antagonist family. Phosphorylated on a serine residue.

Its function is as follows. In the phosphorylated form it could act as an anti-anti-sigma factor that counteracts an anti-sigma factor and thus releases a sigma factor from inhibition. The polypeptide is Putative anti-sigma factor antagonist TM1081 homolog (Thermotoga neapolitana).